A 111-amino-acid chain; its full sequence is uncharacterized protein (111 aa).

The helical transmembrane segment at 60 to 80 (TFGRFLAHISCLICILSKRIF) threads the bilayer.

The protein resides in the mitochondrion membrane. This is an uncharacterized protein from Arabidopsis thaliana (Mouse-ear cress).